Here is a 148-residue protein sequence, read N- to C-terminus: uncharacterized protein (148 aa).

An N-terminal signal peptide occupies residues 1-23 (MKALVAVSAVAVVALLGVSSAQA). The tract at residues 22–45 (QADPEADPGAGEANYGGPPSSPRL) is disordered.

The protein to M.leprae ML2452.

This is an uncharacterized protein from Mycobacterium bovis (strain ATCC BAA-935 / AF2122/97).